Here is a 360-residue protein sequence, read N- to C-terminus: DNA replication and repair protein RecF (360 aa).

G30 to T37 provides a ligand contact to ATP.

The protein belongs to the RecF family.

The protein localises to the cytoplasm. The RecF protein is involved in DNA metabolism; it is required for DNA replication and normal SOS inducibility. RecF binds preferentially to single-stranded, linear DNA. It also seems to bind ATP. The protein is DNA replication and repair protein RecF of Shewanella sediminis (strain HAW-EB3).